The chain runs to 181 residues: Large ribosomal subunit protein uL6 (181 aa).

Belongs to the universal ribosomal protein uL6 family. Part of the 50S ribosomal subunit.

Functionally, this protein binds to the 23S rRNA, and is important in its secondary structure. It is located near the subunit interface in the base of the L7/L12 stalk, and near the tRNA binding site of the peptidyltransferase center. The chain is Large ribosomal subunit protein uL6 from Hydrogenobaculum sp. (strain Y04AAS1).